The following is a 233-amino-acid chain: Orotidine 5'-phosphate decarboxylase (233 aa).

Residues Asp9, Lys31, 58-67 (DLKLHDIPNT), Thr120, Arg182, Gln191, Gly211, and Arg212 contribute to the substrate site. The active-site Proton donor is Lys60.

This sequence belongs to the OMP decarboxylase family. Type 1 subfamily. In terms of assembly, homodimer.

The catalysed reaction is orotidine 5'-phosphate + H(+) = UMP + CO2. The protein operates within pyrimidine metabolism; UMP biosynthesis via de novo pathway; UMP from orotate: step 2/2. Catalyzes the decarboxylation of orotidine 5'-monophosphate (OMP) to uridine 5'-monophosphate (UMP). The protein is Orotidine 5'-phosphate decarboxylase of Listeria welshimeri serovar 6b (strain ATCC 35897 / DSM 20650 / CCUG 15529 / CIP 8149 / NCTC 11857 / SLCC 5334 / V8).